A 135-amino-acid chain; its full sequence is Large ribosomal subunit protein uL16c (135 aa).

Positions 1 to 17 are enriched in basic residues; sequence MLSPKRTKFRKQHRNRM. The interval 1–22 is disordered; the sequence is MLSPKRTKFRKQHRNRMNGKAS.

It belongs to the universal ribosomal protein uL16 family. As to quaternary structure, part of the 50S ribosomal subunit.

The protein resides in the plastid. The protein localises to the chloroplast. This Gracilaria tenuistipitata (Red alga) protein is Large ribosomal subunit protein uL16c.